The chain runs to 75 residues: Cytochrome c oxidase subunit 6C (75 aa).

The Mitochondrial matrix portion of the chain corresponds to 1–13 (MASEVLAKPQMRG). The helical transmembrane segment at 14–54 (LLARRLRIHMVGAFLISLGVAALYKFGVAEPRKKAYADFYK) threads the bilayer. Over 55 to 75 (NYSPEKDFEEMKKAGVFRSIK) the chain is Mitochondrial intermembrane.

The protein belongs to the cytochrome c oxidase subunit 6c family. Component of the cytochrome c oxidase (complex IV, CIV), a multisubunit enzyme composed of 14 subunits. The complex is composed of a catalytic core of 3 subunits MT-CO1, MT-CO2 and MT-CO3, encoded in the mitochondrial DNA, and 11 supernumerary subunits COX4I, COX5A, COX5B, COX6A, COX6B, COX6C, COX7A, COX7B, COX7C, COX8 and NDUFA4, which are encoded in the nuclear genome. The complex exists as a monomer or a dimer and forms supercomplexes (SCs) in the inner mitochondrial membrane with NADH-ubiquinone oxidoreductase (complex I, CI) and ubiquinol-cytochrome c oxidoreductase (cytochrome b-c1 complex, complex III, CIII), resulting in different assemblies (supercomplex SCI(1)III(2)IV(1) and megacomplex MCI(2)III(2)IV(2)).

The protein resides in the mitochondrion inner membrane. Its pathway is energy metabolism; oxidative phosphorylation. Component of the cytochrome c oxidase, the last enzyme in the mitochondrial electron transport chain which drives oxidative phosphorylation. The respiratory chain contains 3 multisubunit complexes succinate dehydrogenase (complex II, CII), ubiquinol-cytochrome c oxidoreductase (cytochrome b-c1 complex, complex III, CIII) and cytochrome c oxidase (complex IV, CIV), that cooperate to transfer electrons derived from NADH and succinate to molecular oxygen, creating an electrochemical gradient over the inner membrane that drives transmembrane transport and the ATP synthase. Cytochrome c oxidase is the component of the respiratory chain that catalyzes the reduction of oxygen to water. Electrons originating from reduced cytochrome c in the intermembrane space (IMS) are transferred via the dinuclear copper A center (CU(A)) of subunit 2 and heme A of subunit 1 to the active site in subunit 1, a binuclear center (BNC) formed by heme A3 and copper B (CU(B)). The BNC reduces molecular oxygen to 2 water molecules using 4 electrons from cytochrome c in the IMS and 4 protons from the mitochondrial matrix. This chain is Cytochrome c oxidase subunit 6C (COX6C), found in Saimiri sciureus (Common squirrel monkey).